A 287-amino-acid polypeptide reads, in one-letter code: Glutamate racemase (287 aa).

The segment covering 1 to 15 (MATKPQDANTTSREA) has biased composition (polar residues). The interval 1–25 (MATKPQDANTTSREAITSKADSPPR) is disordered. Substrate contacts are provided by residues 32–33 (DS) and 64–65 (YG). The active-site Proton donor/acceptor is the Cys-96. 97-98 (NT) lines the substrate pocket. The active-site Proton donor/acceptor is Cys-208. Position 209–210 (209–210 (TH)) interacts with substrate.

Belongs to the aspartate/glutamate racemases family.

The enzyme catalyses L-glutamate = D-glutamate. The protein operates within cell wall biogenesis; peptidoglycan biosynthesis. Functionally, provides the (R)-glutamate required for cell wall biosynthesis. The sequence is that of Glutamate racemase from Yersinia pseudotuberculosis serotype IB (strain PB1/+).